The chain runs to 339 residues: Ketol-acid reductoisomerase (NADP(+)) (339 aa).

The KARI N-terminal Rossmann domain maps to 1-182 (MRVYYDRDAD…GGGRAGIIET (182 aa)). NADP(+) is bound by residues 24–27 (YGSQ), Arg48, Ser51, Thr53, and 83–86 (DELQ). The active site involves His108. NADP(+) is bound at residue Gly134. Positions 183 to 328 (SFKEECETDL…AKLREMMPWI (146 aa)) constitute a KARI C-terminal knotted domain. Mg(2+) is bound by residues Asp191, Glu195, Glu227, and Glu231. Residue Ser252 coordinates substrate.

The protein belongs to the ketol-acid reductoisomerase family. Requires Mg(2+) as cofactor.

It carries out the reaction (2R)-2,3-dihydroxy-3-methylbutanoate + NADP(+) = (2S)-2-acetolactate + NADPH + H(+). It catalyses the reaction (2R,3R)-2,3-dihydroxy-3-methylpentanoate + NADP(+) = (S)-2-ethyl-2-hydroxy-3-oxobutanoate + NADPH + H(+). It functions in the pathway amino-acid biosynthesis; L-isoleucine biosynthesis; L-isoleucine from 2-oxobutanoate: step 2/4. Its pathway is amino-acid biosynthesis; L-valine biosynthesis; L-valine from pyruvate: step 2/4. In terms of biological role, involved in the biosynthesis of branched-chain amino acids (BCAA). Catalyzes an alkyl-migration followed by a ketol-acid reduction of (S)-2-acetolactate (S2AL) to yield (R)-2,3-dihydroxy-isovalerate. In the isomerase reaction, S2AL is rearranged via a Mg-dependent methyl migration to produce 3-hydroxy-3-methyl-2-ketobutyrate (HMKB). In the reductase reaction, this 2-ketoacid undergoes a metal-dependent reduction by NADPH to yield (R)-2,3-dihydroxy-isovalerate. This chain is Ketol-acid reductoisomerase (NADP(+)), found in Rhodopseudomonas palustris (strain BisB5).